A 114-amino-acid chain; its full sequence is UPF0145 protein TT_C1581 (114 aa).

This sequence belongs to the UPF0145 family.

This chain is UPF0145 protein TT_C1581, found in Thermus thermophilus (strain ATCC BAA-163 / DSM 7039 / HB27).